The primary structure comprises 284 residues: 2-dehydro-3-deoxyphosphooctonate aldolase (284 aa).

Belongs to the KdsA family.

The protein localises to the cytoplasm. The catalysed reaction is D-arabinose 5-phosphate + phosphoenolpyruvate + H2O = 3-deoxy-alpha-D-manno-2-octulosonate-8-phosphate + phosphate. It participates in carbohydrate biosynthesis; 3-deoxy-D-manno-octulosonate biosynthesis; 3-deoxy-D-manno-octulosonate from D-ribulose 5-phosphate: step 2/3. Its pathway is bacterial outer membrane biogenesis; lipopolysaccharide biosynthesis. In Actinobacillus succinogenes (strain ATCC 55618 / DSM 22257 / CCUG 43843 / 130Z), this protein is 2-dehydro-3-deoxyphosphooctonate aldolase.